The chain runs to 264 residues: Tryptophan synthase alpha chain (264 aa).

Active-site proton acceptor residues include Glu49 and Asp60.

Belongs to the TrpA family. As to quaternary structure, tetramer of two alpha and two beta chains.

It catalyses the reaction (1S,2R)-1-C-(indol-3-yl)glycerol 3-phosphate + L-serine = D-glyceraldehyde 3-phosphate + L-tryptophan + H2O. Its pathway is amino-acid biosynthesis; L-tryptophan biosynthesis; L-tryptophan from chorismate: step 5/5. In terms of biological role, the alpha subunit is responsible for the aldol cleavage of indoleglycerol phosphate to indole and glyceraldehyde 3-phosphate. This Microcystis aeruginosa (strain NIES-843 / IAM M-2473) protein is Tryptophan synthase alpha chain.